A 744-amino-acid polypeptide reads, in one-letter code: Probable methylmalonyl-CoA mutase, mitochondrial (744 aa).

Residues 605 to 737 (QPRIMVAKMG…EKLEANLPEA (133 aa)) enclose the B12-binding domain. His-618 is a binding site for adenosylcob(III)alamin.

This sequence belongs to the methylmalonyl-CoA mutase family. In terms of assembly, homodimer. The cofactor is adenosylcob(III)alamin.

It localises to the mitochondrion matrix. The catalysed reaction is (R)-methylmalonyl-CoA = succinyl-CoA. Functionally, involved, in man, in the degradation of several amino acids, odd-chain fatty acids and cholesterol via propionyl-CoA to the tricarboxylic acid cycle. MCM has different functions in other species. This Caenorhabditis elegans protein is Probable methylmalonyl-CoA mutase, mitochondrial (mmcm-1).